The following is a 451-amino-acid chain: Chromosomal replication initiator protein DnaA (451 aa).

The tract at residues 1–72 (MQSIEDIWQE…ANILQEITGR (72 aa)) is domain I, interacts with DnaA modulators. The domain II stretch occupies residues 72–108 (RLFDVRFIDGEQEENFEYTVIKPNPALDEDGVEIGKH). Positions 109–325 (MLNPRYVFDT…GALIRVVAYS (217 aa)) are domain III, AAA+ region. Residues G153, G155, K156, and T157 each contribute to the ATP site. The domain IV, binds dsDNA stretch occupies residues 326–451 (SLVNKDITAG…KNLRKAQNMF (126 aa)).

It belongs to the DnaA family. In terms of assembly, oligomerizes as a right-handed, spiral filament on DNA at oriC.

It localises to the cytoplasm. Plays an essential role in the initiation and regulation of chromosomal replication. ATP-DnaA binds to the origin of replication (oriC) to initiate formation of the DNA replication initiation complex once per cell cycle. Binds the DnaA box (a 9 base pair repeat at the origin) and separates the double-stranded (ds)DNA. Forms a right-handed helical filament on oriC DNA; dsDNA binds to the exterior of the filament while single-stranded (ss)DNA is stabiized in the filament's interior. The ATP-DnaA-oriC complex binds and stabilizes one strand of the AT-rich DNA unwinding element (DUE), permitting loading of DNA polymerase. After initiation quickly degrades to an ADP-DnaA complex that is not apt for DNA replication. Binds acidic phospholipids. The sequence is that of Chromosomal replication initiator protein DnaA from Listeria monocytogenes serotype 4b (strain CLIP80459).